A 90-amino-acid polypeptide reads, in one-letter code: Acylphosphatase (90 aa).

An Acylphosphatase-like domain is found at 3-90; the sequence is KKQFIVYGLV…REFTDFSVRY (88 aa). Residues Arg18 and Asn36 contribute to the active site.

It belongs to the acylphosphatase family.

The enzyme catalyses an acyl phosphate + H2O = a carboxylate + phosphate + H(+). This chain is Acylphosphatase (acyP), found in Pasteurella multocida (strain Pm70).